The primary structure comprises 262 residues: CD99 antigen-like protein 2 (262 aa).

Positions 1–25 are cleaved as a signal peptide; that stretch reads MVAWRSAFLVCLAFSLATLVQRGSG. Topologically, residues 26 to 185 are extracellular; it reads DFDDFNLEDA…PGSGMVAEPG (160 aa). The tract at residues 38-181 is disordered; sequence ETSSVKQPWD…SNDDPGSGMV (144 aa). Low complexity-rich tracts occupy residues 49–60 and 98–119; these read TTTTTTNRPGTT and VTTT…GNDF. Composition is skewed to basic and acidic residues over residues 125-136 and 159-168; these read LDDRNDRDDGRR and YKPDKGKGDG. Residue S178 is glycosylated (O-linked (Xyl...) (chondroitin sulfate) serine). The chain crosses the membrane as a helical span at residues 186 to 206; the sequence is TIAGVASALAMALIGAVSSYI. The Cytoplasmic portion of the chain corresponds to 207-262; it reads SYQQKKFCFSIQQGLNADYVKGENLEAVVCEEPQVKYSTLHTQSAEPPPPPEPARI.

It belongs to the CD99 family. In terms of processing, O-glycosylated. In terms of tissue distribution, detected in cerebrospinal fluid (at protein level). Expressed in many tissues, with low expression in thymus.

Its subcellular location is the cell membrane. The protein resides in the cell junction. It is found in the secreted. In terms of biological role, plays a role in a late step of leukocyte extravasation helping cells to overcome the endothelial basement membrane. Acts at the same site as, but independently of, PECAM1. Homophilic adhesion molecule, but these interactions may not be required for cell aggregation. The sequence is that of CD99 antigen-like protein 2 (CD99L2) from Homo sapiens (Human).